Consider the following 1193-residue polypeptide: Probable DNA-directed RNA polymerase II subunit RPB2 homolog (1193 aa).

D808 is a Mg(2+) binding site. 4 residues coordinate Zn(2+): C1137, C1140, C1155, and C1158. A C4-type zinc finger spans residues 1137–1158 (CVPCKSYFKVVKTQNGFFCSGC).

Belongs to the RNA polymerase beta chain family.

It catalyses the reaction RNA(n) + a ribonucleoside 5'-triphosphate = RNA(n+1) + diphosphate. In terms of biological role, component of the DNA-dependent RNA polymerase that catalyzes the transcription of DNA into RNA using the four ribonucleoside triphosphates as substrates. Second largest component of RNA polymerase II which synthesizes mRNA precursors and many functional non-coding RNAs. Proposed to contribute to the polymerase catalytic activity and forms the polymerase active center together with the largest subunit. The polypeptide is Probable DNA-directed RNA polymerase II subunit RPB2 homolog (Invertebrate iridescent virus 6 (IIV-6)).